The chain runs to 395 residues: Flap endonuclease 1 (395 aa).

The tract at residues 1 to 104 (MGIKHLYQLI…GELAKRFQRK (104 aa)) is N-domain. Aspartate 34 contacts Mg(2+). Residues arginine 47 and arginine 70 each contribute to the DNA site. Positions 86, 158, 160, 179, and 181 each coordinate Mg(2+). Residues 122 to 253 (DVEKFSRRTV…STALKLIREH (132 aa)) form an I-domain region. Glutamate 158 provides a ligand contact to DNA. The DNA site is built by glycine 231 and aspartate 233. Aspartate 233 serves as a coordination point for Mg(2+). Positions 341-349 (QQSRLEGFF) are interaction with PCNA. The disordered stretch occupies residues 359–395 (KATLKRKADEKLEEKKKKQKVDAKAKKQAKAKPRTAG). A compositionally biased stretch (basic and acidic residues) spans 364–383 (RKADEKLEEKKKKQKVDAKA). A compositionally biased stretch (basic residues) spans 384–395 (KKQAKAKPRTAG).

This sequence belongs to the XPG/RAD2 endonuclease family. FEN1 subfamily. As to quaternary structure, interacts with PCNA. Three molecules of fen1 bind to one PCNA trimer with each molecule binding to one PCNA monomer. PCNA stimulates the nuclease activity without altering cleavage specificity. Mg(2+) serves as cofactor. In terms of processing, phosphorylated. Phosphorylation upon DNA damage induces relocalization to the nuclear plasma.

Its subcellular location is the nucleus. It is found in the nucleolus. It localises to the nucleoplasm. The protein localises to the mitochondrion. Structure-specific nuclease with 5'-flap endonuclease and 5'-3' exonuclease activities involved in DNA replication and repair. During DNA replication, cleaves the 5'-overhanging flap structure that is generated by displacement synthesis when DNA polymerase encounters the 5'-end of a downstream Okazaki fragment. It enters the flap from the 5'-end and then tracks to cleave the flap base, leaving a nick for ligation. Also involved in the long patch base excision repair (LP-BER) pathway, by cleaving within the apurinic/apyrimidinic (AP) site-terminated flap. Acts as a genome stabilization factor that prevents flaps from equilibrating into structures that lead to duplications and deletions. Also possesses 5'-3' exonuclease activity on nicked or gapped double-stranded DNA, and exhibits RNase H activity. Also involved in replication and repair of rDNA and in repairing mitochondrial DNA. This is Flap endonuclease 1 (fen1) from Pyrenophora tritici-repentis (strain Pt-1C-BFP) (Wheat tan spot fungus).